The sequence spans 21 residues: Fibrinogen beta chain (21 aa).

Gln1 carries the post-translational modification Pyrrolidone carboxylic acid. Acidic residues predominate over residues 1 to 11 (QPSYDYDEEED). Residues 1–21 (QPSYDYDEEEDDRAKLRLDAR) form a disordered region. Position 6 is a sulfotyrosine (Tyr6). The segment covering 12-21 (DRAKLRLDAR) has biased composition (basic and acidic residues).

In terms of assembly, heterohexamer; disulfide linked. Contains 2 sets of 3 non-identical chains (alpha, beta and gamma). The 2 heterotrimers are in head to head conformation with the N-termini in a small central domain. Conversion of fibrinogen to fibrin is triggered by thrombin, which cleaves fibrinopeptides A and B from alpha and beta chains, and thus exposes the N-terminal polymerization sites responsible for the formation of the soft clot.

It localises to the secreted. Cleaved by the protease thrombin to yield monomers which, together with fibrinogen alpha (FGA) and fibrinogen gamma (FGG), polymerize to form an insoluble fibrin matrix. Fibrin has a major function in hemostasis as one of the primary components of blood clots. In addition, functions during the early stages of wound repair to stabilize the lesion and guide cell migration during re-epithelialization. Was originally thought to be essential for platelet aggregation, based on in vitro studies using anticoagulated blood. However subsequent studies have shown that it is not absolutely required for thrombus formation in vivo. Enhances expression of SELP in activated platelets. Maternal fibrinogen is essential for successful pregnancy. Fibrin deposition is also associated with infection, where it protects against IFNG-mediated hemorrhage. May also facilitate the antibacterial immune response via both innate and T-cell mediated pathways. The sequence is that of Fibrinogen beta chain (FGB) from Antilocapra americana (Pronghorn).